The following is a 68-amino-acid chain: MKFSTFDINDEFIANIDYTEEDSRYVGIIYITSKTAQGVVCMAEFDEYFLDYDDMIEWSKRYIKRNLL.

This is an uncharacterized protein from Enterobacteria phage T4 (Bacteriophage T4).